A 353-amino-acid polypeptide reads, in one-letter code: Quinolinate synthase (353 aa).

2 residues coordinate iminosuccinate: H49 and S70. C115 serves as a coordination point for [4Fe-4S] cluster. Residues 141–143 (YAN) and S158 each bind iminosuccinate. C202 provides a ligand contact to [4Fe-4S] cluster. Residues 228-230 (HPE) and T245 each bind iminosuccinate. C299 serves as a coordination point for [4Fe-4S] cluster.

This sequence belongs to the quinolinate synthase family. Type 1 subfamily. It depends on [4Fe-4S] cluster as a cofactor.

It localises to the cytoplasm. It carries out the reaction iminosuccinate + dihydroxyacetone phosphate = quinolinate + phosphate + 2 H2O + H(+). The protein operates within cofactor biosynthesis; NAD(+) biosynthesis; quinolinate from iminoaspartate: step 1/1. Its function is as follows. Catalyzes the condensation of iminoaspartate with dihydroxyacetone phosphate to form quinolinate. In Marinobacter nauticus (strain ATCC 700491 / DSM 11845 / VT8) (Marinobacter aquaeolei), this protein is Quinolinate synthase.